Reading from the N-terminus, the 368-residue chain is Solute carrier family 35 member G1 (368 aa).

A run of 10 helical transmembrane segments spans residues 72-92, 100-120, 134-154, 161-181, 190-210, 225-245, 256-276, 289-309, 316-336, and 340-360; these read GLGL…SLFV, AVEI…PCLI, LFLF…YYAF, DATV…WIFL, AFFT…PFIF, IKGT…LVIL, LSIW…LFVI, LFLI…TKAV, LVAI…IAFF, and PTWW…GATI. EamA domains are found at residues 83 to 205 and 236 to 360; these read FLFS…LIVR and VLAA…GATI.

The protein belongs to the TMEM20 family. In terms of assembly, interacts with STIM1; stimulated by depletion of intracellular calcium. Interacts with ORAI1. Interacts with the plasma membrane calcium-transporting ATPases ATP2B1 and ATP2B4. Interacts with ATP1A1, ATP2A2, KPNB1 and XPO1.

Its subcellular location is the cell membrane. It is found in the endoplasmic reticulum membrane. Functionally, may play a role in intracellular calcium sensing and homeostasis. May act as a negative regulator of plasma membrane calcium-transporting ATPases preventing calcium efflux from the cell. This Mus musculus (Mouse) protein is Solute carrier family 35 member G1 (Slc35g1).